A 49-amino-acid chain; its full sequence is Osteocalcin (49 aa).

The Gla domain occupies 1–47 (YLDHGLGAPAPYPDPLEPRREVCELNPDCDELADHIGFQEAYRRFYG). Hydroxyproline is present on proline 9. Glutamate 17, glutamate 21, glutamate 24, and aspartate 30 together coordinate Ca(2+). 4-carboxyglutamate occurs at positions 17, 21, and 24. A disulfide bridge connects residues cysteine 23 and cysteine 29.

The protein belongs to the osteocalcin/matrix Gla protein family. In terms of processing, gamma-carboxyglutamate residues are formed by vitamin K dependent carboxylation by GGCX. These residues are essential for the binding of calcium. Decarboxylation promotes the hormone activity.

Its subcellular location is the secreted. Its function is as follows. The carboxylated form is one of the main organic components of the bone matrix, which constitutes 1-2% of the total bone protein. It acts as a negative regulator of bone formation and is required to limit bone formation without impairing bone resorption or mineralization. The carboxylated form binds strongly to apatite and calcium. Functionally, the uncarboxylated form acts as a hormone secreted by osteoblasts, which regulates different cellular processes, such as energy metabolism, male fertility and brain development. Regulates of energy metabolism by acting as a hormone favoring pancreatic beta-cell proliferation, insulin secretion and sensitivity and energy expenditure. Uncarboxylated osteocalcin hormone also promotes testosterone production in the testes: acts as a ligand for G protein-coupled receptor GPRC6A at the surface of Leydig cells, initiating a signaling response that promotes the expression of enzymes required for testosterone synthesis in a CREB-dependent manner. Also acts as a regulator of brain development: osteocalcin hormone crosses the blood-brain barrier and acts as a ligand for GPR158 on neurons, initiating a signaling response that prevents neuronal apoptosis in the hippocampus, favors the synthesis of all monoamine neurotransmitters and inhibits that of gamma-aminobutyric acid (GABA). Osteocalcin also crosses the placenta during pregnancy and maternal osteocalcin is required for fetal brain development. This is Osteocalcin (BGLAP) from Sus scrofa (Pig).